A 460-amino-acid chain; its full sequence is Bifunctional protein GlmU (460 aa).

The segment at 1-228 (MKNYALVLAA…NSLAMGVNDL (228 aa)) is pyrophosphorylase. UDP-N-acetyl-alpha-D-glucosamine is bound by residues 8–11 (LAAG), Lys22, Gln72, and 77–78 (GT). Mg(2+) is bound at residue Asp102. Gly139, Glu154, Asn169, and Asn226 together coordinate UDP-N-acetyl-alpha-D-glucosamine. Position 226 (Asn226) interacts with Mg(2+). A linker region spans residues 229-249 (YAISKAEKYLREYINKDHMLN). The tract at residues 250–460 (GVSMINPETI…LISPKPKKEE (211 aa)) is N-acetyltransferase. UDP-N-acetyl-alpha-D-glucosamine-binding residues include Arg331 and Lys349. His361 functions as the Proton acceptor in the catalytic mechanism. Residues Tyr364 and Asn375 each contribute to the UDP-N-acetyl-alpha-D-glucosamine site. Residues 384–385 (NY), Ala421, and Arg438 each bind acetyl-CoA.

It in the N-terminal section; belongs to the N-acetylglucosamine-1-phosphate uridyltransferase family. This sequence in the C-terminal section; belongs to the transferase hexapeptide repeat family. In terms of assembly, homotrimer. It depends on Mg(2+) as a cofactor.

Its subcellular location is the cytoplasm. The enzyme catalyses alpha-D-glucosamine 1-phosphate + acetyl-CoA = N-acetyl-alpha-D-glucosamine 1-phosphate + CoA + H(+). The catalysed reaction is N-acetyl-alpha-D-glucosamine 1-phosphate + UTP + H(+) = UDP-N-acetyl-alpha-D-glucosamine + diphosphate. It functions in the pathway nucleotide-sugar biosynthesis; UDP-N-acetyl-alpha-D-glucosamine biosynthesis; N-acetyl-alpha-D-glucosamine 1-phosphate from alpha-D-glucosamine 6-phosphate (route II): step 2/2. The protein operates within nucleotide-sugar biosynthesis; UDP-N-acetyl-alpha-D-glucosamine biosynthesis; UDP-N-acetyl-alpha-D-glucosamine from N-acetyl-alpha-D-glucosamine 1-phosphate: step 1/1. It participates in bacterial outer membrane biogenesis; LPS lipid A biosynthesis. Functionally, catalyzes the last two sequential reactions in the de novo biosynthetic pathway for UDP-N-acetylglucosamine (UDP-GlcNAc). The C-terminal domain catalyzes the transfer of acetyl group from acetyl coenzyme A to glucosamine-1-phosphate (GlcN-1-P) to produce N-acetylglucosamine-1-phosphate (GlcNAc-1-P), which is converted into UDP-GlcNAc by the transfer of uridine 5-monophosphate (from uridine 5-triphosphate), a reaction catalyzed by the N-terminal domain. This Acholeplasma laidlawii (strain PG-8A) protein is Bifunctional protein GlmU.